A 155-amino-acid polypeptide reads, in one-letter code: MLHKKYRPNVAAIIMSPDYPNTCEVFIAERIDIEGAWQFPQGGIDEGETPLEALHRELLEEIGTNEIEILAQYPRWIAYDFPSNMEHKFYAFDGQKQRYFLVRLKHANNIDLNKHTPEFRAYQFIHLKDLLKKIVPFKRQVYRQVIAYFKREGYL.

The 143-residue stretch at 5-147 (KYRPNVAAII…KRQVYRQVIA (143 aa)) folds into the Nudix hydrolase domain. The short motif at 42 to 63 (GGIDEGETPLEALHRELLEEIG) is the Nudix box element.

Belongs to the Nudix hydrolase family. RppH subfamily. The cofactor is a divalent metal cation.

In terms of biological role, accelerates the degradation of transcripts by removing pyrophosphate from the 5'-end of triphosphorylated RNA, leading to a more labile monophosphorylated state that can stimulate subsequent ribonuclease cleavage. The protein is RNA pyrophosphohydrolase of Helicobacter pylori (strain HPAG1).